The primary structure comprises 108 residues: Protein FATTY ACID EXPORT 7 (108 aa).

The next 3 membrane-spanning stretches (helical) occupy residues 32–52, 55–75, and 85–105; these read ISLV…TELP, PVLA…MMGS, and PAGL…HGLI.

This sequence belongs to the TMEM14 family.

The protein localises to the membrane. Functionally, may be involved in free fatty acids export. The sequence is that of Protein FATTY ACID EXPORT 7 from Arabidopsis thaliana (Mouse-ear cress).